The primary structure comprises 412 residues: Tyrosine--tRNA ligase (412 aa).

Tyr-31 contacts L-tyrosine. The 'HIGH' region signature appears at 36–45; that stretch reads PTAPSLHIGH. L-tyrosine-binding residues include Tyr-162 and Gln-166. The short motif at 222–226 is the 'KMSKS' region element; the sequence is KIGKT. Residue Lys-225 coordinates ATP. The region spanning 345-411 is the S4 RNA-binding domain; it reads KRWLDIVVEL…GKRKKQVIDL (67 aa).

This sequence belongs to the class-I aminoacyl-tRNA synthetase family. TyrS type 1 subfamily. In terms of assembly, homodimer.

The protein resides in the cytoplasm. It carries out the reaction tRNA(Tyr) + L-tyrosine + ATP = L-tyrosyl-tRNA(Tyr) + AMP + diphosphate + H(+). In terms of biological role, catalyzes the attachment of tyrosine to tRNA(Tyr) in a two-step reaction: tyrosine is first activated by ATP to form Tyr-AMP and then transferred to the acceptor end of tRNA(Tyr). This chain is Tyrosine--tRNA ligase, found in Chlamydia trachomatis serovar A (strain ATCC VR-571B / DSM 19440 / HAR-13).